The following is a 485-amino-acid chain: E3 ubiquitin-protein ligase TRIM34B (485 aa).

Residues 15 to 58 form an RING-type zinc finger; sequence CPVCQELLTKALSLGCGHLVCQACLISNKNAVINPRGKSSCPVC. A B box-type zinc finger spans residues 91-127; the sequence is TKRDLCVHHGEKLLLFCKEDKKVICWVCERSQEHRGH. Positions 96, 99, 118, and 124 each coordinate Zn(2+). Residues 136-170 adopt a coiled-coil conformation; sequence VRECQENLQKALTRLRKEQEKVETLEADIKEDRLS. In terms of domain architecture, B30.2/SPRY spans 282-485; the sequence is LSGMLQKFRE…APMTLCPLNS (204 aa).

This sequence belongs to the TRIM/RBCC family. Homotrimer. Interacts (via B-box and SPRY domain) with TRIM5.

It localises to the cytoplasm. Its subcellular location is the mitochondrion. It catalyses the reaction S-ubiquitinyl-[E2 ubiquitin-conjugating enzyme]-L-cysteine + [acceptor protein]-L-lysine = [E2 ubiquitin-conjugating enzyme]-L-cysteine + N(6)-ubiquitinyl-[acceptor protein]-L-lysine.. Its pathway is protein modification; protein ubiquitination. Functionally, functions as antiviral protein and contributes to the defense against retroviral infections. Acts as a capsid-specific restriction factor with the help of TRIM5 and prevents infection from non-host-adapted retroviruses. During influenza A virus infection, promotes programmed cell death by targeting ZBP1 for 'Lys-63'-linked polyubiquitination. In turn, promotes ZBP1 recruitment of RIPK3 to mediate virus-induced programmed necrosis. Negatively regulates the function of mitochondria by enhancing mitochondrial depolarization leading to cytochrome c release and mitochondria-dependent apoptosis. Also promotes the formation of multinucleated giant cells by means of cell fusion and phagocytosis in epithelial cells. Regulates intestinal inflammation by controlling the exocytosis of the major component of colonic mucus MUC2 from colonic goblet cells. The sequence is that of E3 ubiquitin-protein ligase TRIM34B from Mus musculus (Mouse).